Consider the following 455-residue polypeptide: Probable pectate lyase 6 (455 aa).

The signal sequence occupies residues 1–25; it reads MVNLGSYVFVFVALSLTVVVPSVQA. 2 N-linked (GlcNAc...) asparagine glycosylation sites follow: Asn-55 and Asn-75. Positions 247, 271, and 275 each coordinate Ca(2+). The active site involves Arg-327.

The protein belongs to the polysaccharide lyase 1 family. It depends on Ca(2+) as a cofactor.

It catalyses the reaction Eliminative cleavage of (1-&gt;4)-alpha-D-galacturonan to give oligosaccharides with 4-deoxy-alpha-D-galact-4-enuronosyl groups at their non-reducing ends.. It functions in the pathway glycan metabolism; pectin degradation; 2-dehydro-3-deoxy-D-gluconate from pectin: step 2/5. This Arabidopsis thaliana (Mouse-ear cress) protein is Probable pectate lyase 6.